The sequence spans 84 residues: U4-theraphotoxin-Hhn1a (84 aa).

An N-terminal signal peptide occupies residues 1-22 (MKVTLIAILTRAAVLVLHTTAA). Residues 23-47 (EELEESQLMEVSMPDTELAAVDEER) constitute a propeptide that is removed on maturation. 3 disulfide bridges follow: Cys51/Cys65, Cys55/Cys76, and Cys70/Cys81.

The protein belongs to the neurotoxin 12 (Hwtx-2) family. 02 (Hwtx-2) subfamily. Expressed by the venom gland.

The protein resides in the secreted. Its function is as follows. Postsynaptic neurotoxin. The chain is U4-theraphotoxin-Hhn1a from Cyriopagopus hainanus (Chinese bird spider).